The primary structure comprises 236 residues: NAD(P)H-hydrate epimerase (236 aa).

The YjeF N-terminal domain occupies 11 to 217 (AAALDRELMS…SIAKKYDFDV (207 aa)). (6S)-NADPHX is bound at residue 61–65 (NNGGD). K(+) contacts are provided by N62 and D123. Residues 127–133 (GFSFSGE) and D156 contribute to the (6S)-NADPHX site. S159 contacts K(+).

This sequence belongs to the NnrE/AIBP family. K(+) serves as cofactor.

The protein localises to the cytoplasm. The protein resides in the mitochondrion. The enzyme catalyses (6R)-NADHX = (6S)-NADHX. It catalyses the reaction (6R)-NADPHX = (6S)-NADPHX. Its function is as follows. Catalyzes the epimerization of the S- and R-forms of NAD(P)HX, a damaged form of NAD(P)H that is a result of enzymatic or heat-dependent hydration. This is a prerequisite for the S-specific NAD(P)H-hydrate dehydratase to allow the repair of both epimers of NAD(P)HX. The sequence is that of NAD(P)H-hydrate epimerase from Neurospora crassa (strain ATCC 24698 / 74-OR23-1A / CBS 708.71 / DSM 1257 / FGSC 987).